We begin with the raw amino-acid sequence, 191 residues long: GTP-dependent dephospho-CoA kinase (191 aa).

Residues Asp-46, Asp-65, Lys-67, and Glu-122 each coordinate GTP.

This sequence belongs to the GTP-dependent DPCK family.

It carries out the reaction 3'-dephospho-CoA + GTP = GDP + CoA + H(+). It functions in the pathway cofactor biosynthesis; coenzyme A biosynthesis. In terms of biological role, catalyzes the GTP-dependent phosphorylation of the 3'-hydroxyl group of dephosphocoenzyme A to form coenzyme A (CoA). This Methanopyrus kandleri (strain AV19 / DSM 6324 / JCM 9639 / NBRC 100938) protein is GTP-dependent dephospho-CoA kinase.